The sequence spans 148 residues: Cystatin-C (148 aa).

Residues 1 to 30 (MVGSPRAPLLLLASLIVALALALAVSPAAA) form the signal peptide. A Pyrrolidone carboxylic acid modification is found at Gln-31. The Secondary area of contact signature appears at 84–88 (QVVSG). 2 disulfide bridges follow: Cys-102/Cys-112 and Cys-126/Cys-146.

It localises to the secreted. This is a thiol proteinase inhibitor. This chain is Cystatin-C (CST3), found in Bos taurus (Bovine).